The following is a 396-amino-acid chain: Elongation factor Tu (396 aa).

Positions 10-206 (KPHINVGTIG…ALDSYIPEPQ (197 aa)) constitute a tr-type G domain. The segment at 19 to 26 (GHVDHGKT) is G1. Residue 19–26 (GHVDHGKT) coordinates GTP. Threonine 26 contacts Mg(2+). The interval 60–64 (GITIN) is G2. Residues 81–84 (DCPG) are G3. GTP is bound by residues 81 to 85 (DCPGH) and 136 to 139 (NKAD). The tract at residues 136 to 139 (NKAD) is G4. A G5 region spans residues 174-176 (SAL).

It belongs to the TRAFAC class translation factor GTPase superfamily. Classic translation factor GTPase family. EF-Tu/EF-1A subfamily. As to quaternary structure, monomer.

The protein resides in the cytoplasm. It catalyses the reaction GTP + H2O = GDP + phosphate + H(+). GTP hydrolase that promotes the GTP-dependent binding of aminoacyl-tRNA to the A-site of ribosomes during protein biosynthesis. The polypeptide is Elongation factor Tu (Nitrosospira multiformis (strain ATCC 25196 / NCIMB 11849 / C 71)).